A 338-amino-acid polypeptide reads, in one-letter code: MLAGCRVALPRGLRCCQRVLSWVPVVIISLVVLWSYYAYVWELCLVTVTNPAEKAAYLLIFHTVFLLFIWTYWKAIFTPPKQPTKKFLLPYAEKERYDNEERPEAQKQIVAEFARKLPVYTRTGSGATRFCDTCQMVKPDRCHHCSVCGMCVLKMDHHCPWVNNCIGYSNYKFFLLFLAYAMLYCLYIGCTVFQYFILYWTDTLSNGRAKFHVLFLLFVALMFFISLMFLFGYHCWLVSLNRTTLEAFSTPVFQSGPDKNGFHLGIRRNLEQVFGKERKLWLIPVFTSLGDGFTYPMRMACESRNPLLAAENQWEDDLTDEESQAYCETSHITVHIEK.

The Cytoplasmic portion of the chain corresponds to 1–20; the sequence is MLAGCRVALPRGLRCCQRVL. A helical membrane pass occupies residues 21-41; the sequence is SWVPVVIISLVVLWSYYAYVW. Topologically, residues 42 to 56 are lumenal; that stretch reads ELCLVTVTNPAEKAA. A helical transmembrane segment spans residues 57 to 77; the sequence is YLLIFHTVFLLFIWTYWKAIF. The Cytoplasmic portion of the chain corresponds to 78-172; that stretch reads TPPKQPTKKF…NNCIGYSNYK (95 aa). In terms of domain architecture, DHHC spans 129 to 179; the sequence is RFCDTCQMVKPDRCHHCSVCGMCVLKMDHHCPWVNNCIGYSNYKFFLLFLA. Residues Cys131, Cys134, His144, Cys145, Cys148, Cys151, and His158 each coordinate Zn(2+). Cys159 functions as the S-palmitoyl cysteine intermediate in the catalytic mechanism. A Zn(2+)-binding site is contributed by Cys165. Residues 173 to 193 traverse the membrane as a helical segment; the sequence is FFLLFLAYAMLYCLYIGCTVF. The Lumenal segment spans residues 194 to 210; that stretch reads QYFILYWTDTLSNGRAK. A helical membrane pass occupies residues 211 to 234; the sequence is FHVLFLLFVALMFFISLMFLFGYH. The Cytoplasmic segment spans residues 235–338; it reads CWLVSLNRTT…TSHITVHIEK (104 aa).

The protein belongs to the DHHC palmitoyltransferase family. In terms of processing, autopalmitoylated (in vitro).

The protein localises to the golgi apparatus membrane. It is found in the postsynaptic density. It carries out the reaction L-cysteinyl-[protein] + hexadecanoyl-CoA = S-hexadecanoyl-L-cysteinyl-[protein] + CoA. The catalysed reaction is L-cysteinyl-[protein] + tetradecanoyl-CoA = S-tetradecanoyl-L-cysteinyl-[protein] + CoA. It catalyses the reaction L-cysteinyl-[protein] + octadecanoyl-CoA = S-octadecanoyl-L-cysteinyl-[protein] + CoA. In terms of biological role, palmitoyltransferase that catalyzes the addition of palmitate onto various protein substrates. Has no stringent fatty acid selectivity and in addition to palmitate can also transfer onto target proteins myristate from tetradecanoyl-CoA and stearate from octadecanoyl-CoA. May thereby regulate target proteins association and localization to membranes. In the nervous system, probably catalyzes the palmitoylation of synaptic proteins and is involved in the differentiation of dopaminergic neurons and the development of the diencephalon. This is Palmitoyltransferase ZDHHC15 (zdhhc15) from Xenopus laevis (African clawed frog).